We begin with the raw amino-acid sequence, 67 residues long: Small ribosomal subunit protein bS21 (67 aa).

Positions Glu37–Arg52 are enriched in basic and acidic residues. The disordered stretch occupies residues Glu37 to Phe67.

The protein belongs to the bacterial ribosomal protein bS21 family.

The sequence is that of Small ribosomal subunit protein bS21 from Gluconacetobacter diazotrophicus (strain ATCC 49037 / DSM 5601 / CCUG 37298 / CIP 103539 / LMG 7603 / PAl5).